The chain runs to 521 residues: Bifunctional purine biosynthesis protein PurH (521 aa).

The 145-residue stretch at M1–V145 folds into the MGS-like domain.

This sequence belongs to the PurH family.

It carries out the reaction (6R)-10-formyltetrahydrofolate + 5-amino-1-(5-phospho-beta-D-ribosyl)imidazole-4-carboxamide = 5-formamido-1-(5-phospho-D-ribosyl)imidazole-4-carboxamide + (6S)-5,6,7,8-tetrahydrofolate. The catalysed reaction is IMP + H2O = 5-formamido-1-(5-phospho-D-ribosyl)imidazole-4-carboxamide. It functions in the pathway purine metabolism; IMP biosynthesis via de novo pathway; 5-formamido-1-(5-phospho-D-ribosyl)imidazole-4-carboxamide from 5-amino-1-(5-phospho-D-ribosyl)imidazole-4-carboxamide (10-formyl THF route): step 1/1. The protein operates within purine metabolism; IMP biosynthesis via de novo pathway; IMP from 5-formamido-1-(5-phospho-D-ribosyl)imidazole-4-carboxamide: step 1/1. The polypeptide is Bifunctional purine biosynthesis protein PurH (Burkholderia orbicola (strain MC0-3)).